Here is a 379-residue protein sequence, read N- to C-terminus: Mannitol-1-phosphate 5-dehydrogenase (379 aa).

Position 3 to 14 (3 to 14 (ALHFGAGNIGRG)) interacts with NAD(+).

Belongs to the mannitol dehydrogenase family.

It catalyses the reaction D-mannitol 1-phosphate + NAD(+) = beta-D-fructose 6-phosphate + NADH + H(+). In Actinobacillus pleuropneumoniae serotype 3 (strain JL03), this protein is Mannitol-1-phosphate 5-dehydrogenase.